The sequence spans 88 residues: Cytochrome c oxidase subunit 6B2 (88 aa).

The interval 1–21 (MLGVQAQMPAPGQWTTPPFDP) is disordered. A CHCH domain is found at 29 to 75 (TRNCYQNFLDYHRCVKTMDRRGKNTQACDYYFRVFHSLCPVSWVQRW). The Cx9C motif signature appears at 32–42 (CYQNFLDYHRC). 2 cysteine pairs are disulfide-bonded: Cys32/Cys67 and Cys42/Cys56. The short motif at 56 to 67 (CDYYFRVFHSLC) is the Cx10C motif element.

It belongs to the cytochrome c oxidase subunit 6B family. In terms of assembly, component of the cytochrome c oxidase (complex IV, CIV), a multisubunit enzyme composed of 14 subunits. The complex is composed of a catalytic core of 3 subunits MT-CO1, MT-CO2 and MT-CO3, encoded in the mitochondrial DNA, and 11 supernumerary subunits COX4I, COX5A, COX5B, COX6A, COX6B, COX6C, COX7A, COX7B, COX7C, COX8 and NDUFA4, which are encoded in the nuclear genome. The complex exists as a monomer or a dimer and forms supercomplexes (SCs) in the inner mitochondrial membrane with NADH-ubiquinone oxidoreductase (complex I, CI) and ubiquinol-cytochrome c oxidoreductase (cytochrome b-c1 complex, complex III, CIII), resulting in different assemblies (supercomplex SCI(1)III(2)IV(1) and megacomplex MCI(2)III(2)IV(2)). As to expression, testis specific.

Its subcellular location is the mitochondrion inner membrane. The protein operates within energy metabolism; oxidative phosphorylation. Functionally, component of the cytochrome c oxidase, the last enzyme in the mitochondrial electron transport chain which drives oxidative phosphorylation. The respiratory chain contains 3 multisubunit complexes succinate dehydrogenase (complex II, CII), ubiquinol-cytochrome c oxidoreductase (cytochrome b-c1 complex, complex III, CIII) and cytochrome c oxidase (complex IV, CIV), that cooperate to transfer electrons derived from NADH and succinate to molecular oxygen, creating an electrochemical gradient over the inner membrane that drives transmembrane transport and the ATP synthase. Cytochrome c oxidase is the component of the respiratory chain that catalyzes the reduction of oxygen to water. Electrons originating from reduced cytochrome c in the intermembrane space (IMS) are transferred via the dinuclear copper A center (CU(A)) of subunit 2 and heme A of subunit 1 to the active site in subunit 1, a binuclear center (BNC) formed by heme A3 and copper B (CU(B)). The BNC reduces molecular oxygen to 2 water molecules using 4 electrons from cytochrome c in the IMS and 4 protons from the mitochondrial matrix. The polypeptide is Cytochrome c oxidase subunit 6B2 (Cox6b2) (Rattus norvegicus (Rat)).